A 212-amino-acid chain; its full sequence is MILENFKRESLIPLPVTFISTTSKDGIRNIAPYSCVMPVLRPFDLICVASAKMRDTVVNIKDTGEFVINMPGVEMVDKVIPTASHVPFDVNEFELADLKERPSKKVKAPGIEGCYAWMECKLHNIYEDEYEGFPYLLILGKVVHLEVNDDIYNPEDGSWDIEKANPLMMVESDRGMHFCTVSDINKFEPYGAMFPDGKDPLAWMYEKRETRE.

Belongs to the flavoredoxin family. FMN is required as a cofactor.

This is an uncharacterized protein from Methanothermobacter thermautotrophicus (strain ATCC 29096 / DSM 1053 / JCM 10044 / NBRC 100330 / Delta H) (Methanobacterium thermoautotrophicum).